The chain runs to 262 residues: Acyl-[acyl-carrier-protein]--UDP-N-acetylglucosamine O-acyltransferase (262 aa).

The protein belongs to the transferase hexapeptide repeat family. LpxA subfamily. As to quaternary structure, homotrimer.

The protein resides in the cytoplasm. The catalysed reaction is a (3R)-hydroxyacyl-[ACP] + UDP-N-acetyl-alpha-D-glucosamine = a UDP-3-O-[(3R)-3-hydroxyacyl]-N-acetyl-alpha-D-glucosamine + holo-[ACP]. Its pathway is glycolipid biosynthesis; lipid IV(A) biosynthesis; lipid IV(A) from (3R)-3-hydroxytetradecanoyl-[acyl-carrier-protein] and UDP-N-acetyl-alpha-D-glucosamine: step 1/6. In terms of biological role, involved in the biosynthesis of lipid A, a phosphorylated glycolipid that anchors the lipopolysaccharide to the outer membrane of the cell. This is Acyl-[acyl-carrier-protein]--UDP-N-acetylglucosamine O-acyltransferase from Haemophilus influenzae (strain PittEE).